Here is a 408-residue protein sequence, read N- to C-terminus: Peptidase T (408 aa).

H78 provides a ligand contact to Zn(2+). Residue D80 is part of the active site. D140 lines the Zn(2+) pocket. E173 functions as the Proton acceptor in the catalytic mechanism. E174, D196, and H379 together coordinate Zn(2+).

Belongs to the peptidase M20B family. Zn(2+) serves as cofactor.

The protein resides in the cytoplasm. It catalyses the reaction Release of the N-terminal residue from a tripeptide.. Its function is as follows. Cleaves the N-terminal amino acid of tripeptides. In Escherichia coli O9:H4 (strain HS), this protein is Peptidase T.